The primary structure comprises 33 residues: Dermaseptin-H9 (33 aa).

Leucine 33 carries the leucine amide modification.

The protein belongs to the frog skin active peptide (FSAP) family. Dermaseptin subfamily. As to expression, expressed by the skin glands.

The protein localises to the secreted. In terms of biological role, has antimicrobial activity. The protein is Dermaseptin-H9 of Pithecopus hypochondrialis (Orange-legged leaf frog).